Reading from the N-terminus, the 243-residue chain is tRNA (guanine-N(1)-)-methyltransferase (243 aa).

S-adenosyl-L-methionine is bound by residues Gly108 and 127-132 (LGDFVL).

Belongs to the RNA methyltransferase TrmD family. As to quaternary structure, homodimer.

It is found in the cytoplasm. It carries out the reaction guanosine(37) in tRNA + S-adenosyl-L-methionine = N(1)-methylguanosine(37) in tRNA + S-adenosyl-L-homocysteine + H(+). Specifically methylates guanosine-37 in various tRNAs. The sequence is that of tRNA (guanine-N(1)-)-methyltransferase from Streptococcus pyogenes serotype M5 (strain Manfredo).